We begin with the raw amino-acid sequence, 398 residues long: Lysophosphatidylserine lipase ABHD12 (398 aa).

Residues Met1–Thr16 show a composition bias toward basic and acidic residues. Residues Met1–Gly24 form a disordered region. The Cytoplasmic portion of the chain corresponds to Met1 to Lys74. The chain crosses the membrane as a helical span at residues Ile75–Gly95. Residues Ile96 to His398 are Extracellular-facing. N-linked (GlcNAc...) asparagine glycosylation is present at Asn123. Ser246 serves as the catalytic Nucleophile. Active-site charge relay system residues include Asp333 and His372.

Belongs to the serine esterase family.

The protein localises to the endoplasmic reticulum membrane. The catalysed reaction is 1-(9Z-octadecenoyl)-sn-glycero-3-phospho-L-serine + H2O = sn-glycero-3-phospho-L-serine + (9Z)-octadecenoate + H(+). The enzyme catalyses 1-(9Z-octadecenoyl)-sn-glycero-3-phospho-(1'-sn-glycerol) + H2O = sn-glycero-3-phospho-(1'-sn-glycerol) + (9Z)-octadecenoate + H(+). It catalyses the reaction 1-(9Z-octadecenoyl)-sn-glycero-3-phospho-(1D-myo-inositol) + H2O = sn-glycero-3-phospho-1D-myo-inositol + (9Z)-octadecenoate + H(+). It carries out the reaction 1-(9Z-octadecenoyl)-sn-glycero-3-phosphoethanolamine + H2O = sn-glycero-3-phosphoethanolamine + (9Z)-octadecenoate + H(+). The catalysed reaction is 1-(9Z-octadecenoyl)-sn-glycero-3-phosphocholine + H2O = 1-(9Z-octadecenoyl)-sn-glycerol + phosphocholine + H(+). The enzyme catalyses 2-(9Z-octadecenoyl)-glycerol + H2O = glycerol + (9Z)-octadecenoate + H(+). It catalyses the reaction 1-hexadecanoyl-sn-glycero-3-phospho-L-serine + H2O = sn-glycero-3-phospho-L-serine + hexadecanoate + H(+). It carries out the reaction 2-(5Z,8Z,11Z,14Z-eicosatetraenoyl)-glycerol + H2O = glycerol + (5Z,8Z,11Z,14Z)-eicosatetraenoate + H(+). The catalysed reaction is Hydrolyzes glycerol monoesters of long-chain fatty acids.. The enzyme catalyses 1-decanoylglycerol + H2O = decanoate + glycerol + H(+). It catalyses the reaction 1-dodecanoylglycerol + H2O = dodecanoate + glycerol + H(+). It carries out the reaction 1-tetradecanoylglycerol + H2O = tetradecanoate + glycerol + H(+). The catalysed reaction is 2-hexadecanoylglycerol + H2O = glycerol + hexadecanoate + H(+). The enzyme catalyses 1-(9Z-octadecenoyl)-glycerol + H2O = glycerol + (9Z)-octadecenoate + H(+). It catalyses the reaction 2-(9Z,12Z-octadecadienoyl)-glycerol + H2O = (9Z,12Z)-octadecadienoate + glycerol + H(+). It carries out the reaction 1-(5Z,8Z,11Z,14Z-eicosatetraenoyl)-glycerol + H2O = glycerol + (5Z,8Z,11Z,14Z)-eicosatetraenoate + H(+). The catalysed reaction is 1-(9Z,12Z-octadecadienoyl)-glycerol + H2O = (9Z,12Z)-octadecadienoate + glycerol + H(+). The enzyme catalyses 1-hexadecanoylglycerol + H2O = glycerol + hexadecanoate + H(+). It catalyses the reaction 1-octadecanoylglycerol + H2O = octadecanoate + glycerol + H(+). It carries out the reaction 1-octadecanoyl-2-(9,10-epoxyoctadecanoyl)-sn-glycero-3-phospho-L-serine + H2O = 9,10-epoxyoctadecanoate + 1-octadecanoyl-sn-glycero-3-phosphoserine + H(+). The catalysed reaction is 1-octadecanoyl-2-(10-hydroxyoctadecanoyl)-sn-glycero-3-phospho-L-serine + H2O = 1-octadecanoyl-sn-glycero-3-phosphoserine + 10-hydroxyoctadecanoate + H(+). The enzyme catalyses 1-hexadecanoyl-2-(10-hydroxyoctadecanoyl)-sn-glycero-3-phospho-L-serine + H2O = 10-hydroxyoctadecanoate + 1-hexadecanoyl-sn-glycero-3-phospho-L-serine + H(+). Lysophosphatidylserine (LPS) lipase that mediates the hydrolysis of lysophosphatidylserine, a class of signaling lipids that regulates immunological and neurological processes. Represents a major lysophosphatidylserine lipase in the brain, thereby playing a key role in the central nervous system. Also able to hydrolyze oxidized phosphatidylserine; oxidized phosphatidylserine is produced in response to severe inflammatory stress and constitutes a proapoptotic 'eat me' signal. Also has monoacylglycerol (MAG) lipase activity: hydrolyzes 2-arachidonoylglycerol (2-AG), thereby acting as a regulator of endocannabinoid signaling pathways. Has a strong preference for very-long-chain lipid substrates; substrate specificity is likely due to improved catalysis and not improved substrate binding. The sequence is that of Lysophosphatidylserine lipase ABHD12 from Bos taurus (Bovine).